The sequence spans 216 residues: MKQDSRFPNLFILDHPLIQHKLTHMRDKDTSTRTFRELLREITLLMGYEITRNLPITTKRVETPLVEIDAPVIAGKKLAIVPVLRAGVGMSDGLLDLIPSARVGHIGVYRADDHRPVEYLVRLPDLEDRIFILCDPMVATGYSAVHAVDVLKRRNVPAANIMFVALVAAPEGVQVFQDAHPDVKLFVASLDSHLNEHAYIVPGLGDAGDRLFGTKN.

5-phospho-alpha-D-ribose 1-diphosphate is bound by residues Arg-85, Arg-110, and 135–143; that span reads DPMVATGYS. Uracil contacts are provided by residues Ile-200 and 205–207; that span reads GDA. Position 206 (Asp-206) interacts with 5-phospho-alpha-D-ribose 1-diphosphate.

Belongs to the UPRTase family. It depends on Mg(2+) as a cofactor.

The enzyme catalyses UMP + diphosphate = 5-phospho-alpha-D-ribose 1-diphosphate + uracil. The protein operates within pyrimidine metabolism; UMP biosynthesis via salvage pathway; UMP from uracil: step 1/1. Allosterically activated by GTP. Catalyzes the conversion of uracil and 5-phospho-alpha-D-ribose 1-diphosphate (PRPP) to UMP and diphosphate. In Burkholderia multivorans (strain ATCC 17616 / 249), this protein is Uracil phosphoribosyltransferase.